The sequence spans 190 residues: Inosine triphosphate pyrophosphatase (190 aa).

Position 10-15 (T10–K15) interacts with ITP. E40 is a binding site for Mg(2+). ITP is bound by residues K52, D68–T69, K85, F144–D147, K167, and H172–R173.

The protein belongs to the HAM1 NTPase family. As to quaternary structure, homodimer. The cofactor is Mg(2+). Requires Mn(2+) as cofactor.

It localises to the cytoplasm. The enzyme catalyses ITP + H2O = IMP + diphosphate + H(+). It carries out the reaction dITP + H2O = dIMP + diphosphate + H(+). It catalyses the reaction XTP + H2O = XMP + diphosphate + H(+). In terms of biological role, pyrophosphatase that hydrolyzes non-canonical purine nucleotides such as inosine triphosphate (ITP), deoxyinosine triphosphate (dITP) or xanthosine 5'-triphosphate (XTP) to their respective monophosphate derivatives. The enzyme does not distinguish between the deoxy- and ribose forms. Probably excludes non-canonical purines from RNA and DNA precursor pools, thus preventing their incorporation into RNA and DNA and avoiding chromosomal lesions. This is Inosine triphosphate pyrophosphatase from Culex quinquefasciatus (Southern house mosquito).